Consider the following 555-residue polypeptide: Dynein regulatory complex protein 11 (555 aa).

IQ domains lie at 154-183 (EDEAILMIQKNERGRQARERARLAAITKRQ) and 199-226 (HEEAARKIQAAIRGFLWRRRIKKEADKE). 4 disordered regions span residues 232–255 (MKPKPRDPKRDPQMGEAKNLMRRK), 299–377 (KRNP…EQKI), 450–469 (AAKLGKKGKKKKGKKKEPFS), and 501–555 (AKKD…SCGA). Composition is skewed to basic and acidic residues over residues 235–244 (KPRDPKRDPQ) and 338–367 (GDGKGKGKDGKGDAKKDAKKDPKKDKKGGG). Basic residues predominate over residues 452–464 (KLGKKGKKKKGKK). Basic and acidic residues predominate over residues 501–521 (AKKDEKDAAGDGKGKGKDGKG). A compositionally biased stretch (basic residues) spans 537-546 (KKKKGGKKKS).

This sequence belongs to the AAA ATPase family. DRC11 subfamily. As to quaternary structure, component of the nexin-dynein regulatory complex (N-DRC). Interacts with DRC5.

It localises to the cytoplasm. Its subcellular location is the cytoskeleton. The protein resides in the flagellum axoneme. In terms of biological role, component of the nexin-dynein regulatory complex (N-DRC), a key regulator of ciliary/flagellar motility which maintains the alignment and integrity of the distal axoneme and regulates microtubule sliding in motile axonemes. This is Dynein regulatory complex protein 11 from Chlamydomonas reinhardtii (Chlamydomonas smithii).